The chain runs to 346 residues: Isopentenyl-diphosphate delta-isomerase (346 aa).

9–10 (RK) is a substrate binding site. FMN is bound by residues Ser67, 68–70 (SMT), Ser98, and Asn127. 98 to 100 (SQR) provides a ligand contact to substrate. Gln162 is a binding site for substrate. Glu163 serves as a coordination point for Mg(2+). Residues Lys194, Thr224, 274–276 (GIR), and 295–296 (AA) each bind FMN.

It belongs to the IPP isomerase type 2 family. In terms of assembly, homooctamer. Dimer of tetramers. FMN is required as a cofactor. NADPH serves as cofactor. Requires Mg(2+) as cofactor.

The protein resides in the cytoplasm. It catalyses the reaction isopentenyl diphosphate = dimethylallyl diphosphate. In terms of biological role, involved in the biosynthesis of isoprenoids. Catalyzes the 1,3-allylic rearrangement of the homoallylic substrate isopentenyl (IPP) to its allylic isomer, dimethylallyl diphosphate (DMAPP). The chain is Isopentenyl-diphosphate delta-isomerase from Stutzerimonas stutzeri (strain A1501) (Pseudomonas stutzeri).